We begin with the raw amino-acid sequence, 551 residues long: Glucans biosynthesis protein D (551 aa).

The segment at residues 1 to 32 (MDRRRFIKGSMAMAAVCGTSGIASLFSQAAFA) is a signal peptide (tat-type signal).

This sequence belongs to the OpgD/OpgG family. Post-translationally, predicted to be exported by the Tat system. The position of the signal peptide cleavage has not been experimentally proven.

Its subcellular location is the periplasm. It participates in glycan metabolism; osmoregulated periplasmic glucan (OPG) biosynthesis. In terms of biological role, probably involved in the control of the structural glucose backbone of osmoregulated periplasmic glucans (OPGs). The protein is Glucans biosynthesis protein D of Escherichia coli (strain K12 / MC4100 / BW2952).